A 310-amino-acid polypeptide reads, in one-letter code: Keratin, type II cytoskeletal 8 (310 aa).

The disordered stretch occupies residues 1-38 (QRTLKVSSSGPRSFSSRSFSSGPSSRISSSSYSRVGSN). Lysine 5 participates in a covalent cross-link: Glycyl lysine isopeptide (Lys-Gly) (interchain with G-Cter in SUMO2). Phosphoserine occurs at positions 7, 9, 15, and 16. Over residues 7 to 38 (SSSGPRSFSSRSFSSGPSSRISSSSYSRVGSN) the composition is skewed to low complexity. Arginine 17 bears the Omega-N-methylarginine mark. Residues serine 18, serine 21, and serine 25 each carry the phosphoserine modification. An Omega-N-methylarginine modification is found at arginine 26. Residues serine 28, serine 31, and serine 33 each carry the phosphoserine modification. Arginine 34 carries the omega-N-methylarginine modification. Position 37 is a phosphoserine (serine 37). Asymmetric dimethylarginine; alternate is present on arginine 42. Arginine 42 bears the Omega-N-methylarginine; alternate mark. Positions 92–127 (EKEQIKTLNNKFASFIDKVRFLEQQNKILETKWSFL) are coil 1A. The IF rod domain maps to 92–310 (EKEQIKTLNN…LRHTKTEISE (219 aa)). Lysine 102 is subject to N6-malonyllysine. Residues lysine 123 and lysine 131 each participate in a glycyl lysine isopeptide (Lys-Gly) (interchain with G-Cter in SUMO2) cross-link. The linker 1 stretch occupies residues 128 to 144 (QQQKTSQSNLDGLFEKY). The segment at 145–236 (ITNLRRQLDS…HLYEEEIKEM (92 aa)) is coil 1B. Residue lysine 198 forms a Glycyl lysine isopeptide (Lys-Gly) (interchain with G-Cter in SUMO1); alternate linkage. Lysine 198 participates in a covalent cross-link: Glycyl lysine isopeptide (Lys-Gly) (interchain with G-Cter in SUMO2); alternate. At lysine 208 the chain carries N6-acetyllysine. Tyrosine 229 is subject to Phosphotyrosine. Positions 237–260 (QSQISDTSVVVSMDNSRSLDLDGI) are linker 12. Phosphoserine is present on residues serine 254 and serine 275. The tract at residues 261–310 (IADVRAQYEEIANRSRAEAETMYQIKYEELQLLAGKHGDDLRHTKTEISE) is coil 2. Residue lysine 286 forms a Glycyl lysine isopeptide (Lys-Gly) (interchain with G-Cter in SUMO2) linkage. A Glycyl lysine isopeptide (Lys-Gly) (interchain with G-Cter in SUMO2); alternate cross-link involves residue lysine 296. Lysine 296 carries the post-translational modification N6-acetyllysine; alternate. Residue lysine 305 forms a Glycyl lysine isopeptide (Lys-Gly) (interchain with G-Cter in SUMO2) linkage.

The protein belongs to the intermediate filament family. Heterotetramer of two type I and two type II keratins. Forms a heterodimer with KRT18. Associates with KRT20. Interacts with PNN. When associated with KRT19, interacts with DMD. Interacts with APEX1. Interacts with GPER1. Interacts with EPPK1. Interacts with PKP1 and PKP2. In terms of processing, O-glycosylated. O-GlcNAcylation at multiple sites increases solubility, and decreases stability by inducing proteasomal degradation. O-glycosylated (O-GlcNAcylated), in a cell cycle-dependent manner.

It localises to the cytoplasm. The protein localises to the nucleus. It is found in the nucleoplasm. The protein resides in the nucleus matrix. Functionally, together with KRT19, helps to link the contractile apparatus to dystrophin at the costameres of striated muscle. In Potorous tridactylus (Potoroo), this protein is Keratin, type II cytoskeletal 8.